We begin with the raw amino-acid sequence, 381 residues long: Alkanesulfonate monooxygenase (381 aa).

It belongs to the SsuD family. As to quaternary structure, homotetramer.

The enzyme catalyses an alkanesulfonate + FMNH2 + O2 = an aldehyde + FMN + sulfite + H2O + 2 H(+). In terms of biological role, catalyzes the desulfonation of aliphatic sulfonates. The sequence is that of Alkanesulfonate monooxygenase from Escherichia coli O157:H7.